A 203-amino-acid chain; its full sequence is ATP phosphoribosyltransferase (203 aa).

It belongs to the ATP phosphoribosyltransferase family. Short subfamily.

The protein resides in the cytoplasm. It carries out the reaction 1-(5-phospho-beta-D-ribosyl)-ATP + diphosphate = 5-phospho-alpha-D-ribose 1-diphosphate + ATP. Its pathway is amino-acid biosynthesis; L-histidine biosynthesis; L-histidine from 5-phospho-alpha-D-ribose 1-diphosphate: step 1/9. In terms of biological role, catalyzes the condensation of ATP and 5-phosphoribose 1-diphosphate to form N'-(5'-phosphoribosyl)-ATP (PR-ATP). Has a crucial role in the pathway because the rate of histidine biosynthesis seems to be controlled primarily by regulation of HisG enzymatic activity. This Thermococcus kodakarensis (strain ATCC BAA-918 / JCM 12380 / KOD1) (Pyrococcus kodakaraensis (strain KOD1)) protein is ATP phosphoribosyltransferase.